A 668-amino-acid polypeptide reads, in one-letter code: DNA ligase (668 aa).

NAD(+) is bound by residues 35-39 (DQEYD), 84-85 (SL), and Glu-115. Lys-117 (N6-AMP-lysine intermediate) is an active-site residue. NAD(+) is bound by residues Arg-138, Glu-172, Lys-288, and Lys-312. Positions 406, 409, 425, and 430 each coordinate Zn(2+). Residues 589-668 (KLEGPLKGLV…EEFFDKYGES (80 aa)) enclose the BRCT domain.

It belongs to the NAD-dependent DNA ligase family. LigA subfamily. Mg(2+) is required as a cofactor. Requires Mn(2+) as cofactor.

The catalysed reaction is NAD(+) + (deoxyribonucleotide)n-3'-hydroxyl + 5'-phospho-(deoxyribonucleotide)m = (deoxyribonucleotide)n+m + AMP + beta-nicotinamide D-nucleotide.. DNA ligase that catalyzes the formation of phosphodiester linkages between 5'-phosphoryl and 3'-hydroxyl groups in double-stranded DNA using NAD as a coenzyme and as the energy source for the reaction. It is essential for DNA replication and repair of damaged DNA. The chain is DNA ligase from Petrotoga mobilis (strain DSM 10674 / SJ95).